The primary structure comprises 804 residues: MRALWVLGLCCVLLTFGSVRADDEVDVDGTVEEDLGKSREGSRTDDEVVQREEEAIQLDGLNASQIRELREKSEKFAFQAEVNRMMKLIINSLYKNKEIFLRELISNASDALDKIRLISLTDENALAGNEELTVKIKCDKEKNLLHVTDTGVGMTREELVKNLGTIAKSGTSEFLNKMTEAQEDGQSTSELIGQFGVGFYSAFLVADKVIVTSKHNNDTQHIWESDSNEFSVIADPRGNTLGRGTTITLVLKEEASDYLELDTIKNLVKKYSQFINFPIYVWSSKTETVEEPAEEEEAAKEDKEESDDEAAVEEEEDEKKPKTKKVEKTVWDWELMNDIKPIWQRPSKEVEEDEYKAFYKSFSKESDDPMAYIHFTAEGEVTFKSILFVPTSAPRGLFDEYGSKKSDYIKLYVRRVFITDDFHDMMPKYLNFVKGVVDSDDLPLNVSRETLQQHKLLKVIRKKLVRKTLDMIKKIADEKYNDTFWKEFGTNIKLGVIEDHSNRTRLAKLLRFQSSHHPSDMTSLDQYVERMKEKQDKIYFMAGASRKEAESSPFVERLLKKGYEVIYLTEPVDEYCIQALPEFDGKRFQNVAKEGVKFDESEKSKESREAVEKEFEPLLNWMKDKALKDKIEKAVVSQRLTESPCALVASQYGWSGNMERIMKAQAYQTGKDISTNYYASQKKTFEINPRHPLIRDMLRRVKEDEDDKTVSDLAVVLFETATLRSGYLLPDTKAYGDRIERMLRLSLNIDPDAKVEEEPEEEPEETTEDTAEDTEQDEEEEMDAGTDEEEQETAEKSTAEKDEL.

Residues 1–21 (MRALWVLGLCCVLLTFGSVRA) form the signal peptide. An SRT pseudosubstrate motif motif is present at residues 42-44 (SRT). Asn62 is a glycosylation site (N-linked (GlcNAc...) asparagine). Ser64 carries the phosphoserine modification. The N-linked (GlcNAc...) asparagine glycan is linked to Asn107. Residues Asn107, Asp149, and Asn162 each contribute to the ATP site. Lys168 is modified (N6-(2-hydroxyisobutyryl)lysine). Ser172 is modified (phosphoserine). Position 199 (Phe199) interacts with ATP. Residue Asn217 is glycosylated (N-linked (GlcNAc...) asparagine). Residues 288 to 323 (TVEEPAEEEEAAKEDKEESDDEAAVEEEEDEKKPKT) form a disordered region. Residues 289-317 (VEEPAEEEEAAKEDKEESDDEAAVEEEED) are compositionally biased toward acidic residues. Phosphoserine is present on residues Ser306 and Ser403. Residue Lys404 is modified to N6-succinyllysine. Residue Asn445 is glycosylated (N-linked (GlcNAc...) asparagine). Ser447 bears the Phosphoserine mark. Lys479 is modified (N6-acetyllysine). 2 N-linked (GlcNAc...) asparagine glycosylation sites follow: Asn481 and Asn502. An N6-succinyllysine modification is found at Lys633. Positions 750-804 (DPDAKVEEEPEEEPEETTEDTAEDTEQDEEEEMDAGTDEEEQETAEKSTAEKDEL) are disordered. Acidic residues predominate over residues 757–792 (EEPEEEPEETTEDTAEDTEQDEEEEMDAGTDEEEQE). Thr786 is modified (phosphothreonine). Basic and acidic residues predominate over residues 793-804 (TAEKSTAEKDEL). Residues 801 to 804 (KDEL) carry the Prevents secretion from ER motif.

It belongs to the heat shock protein 90 family. As to quaternary structure, homodimer; disulfide-linked. Component of an EIF2 complex at least composed of CELF1/CUGBP1, CALR, CALR3, EIF2S1, EIF2S2, HSP90B1 and HSPA5. Part of a large chaperone multiprotein complex comprising DNAJB11, HSP90B1, HSPA5, HYOU, PDIA2, PDIA4, PDIA6, PPIB, SDF2L1, UGGT1 and very small amounts of ERP29, but not, or at very low levels, CALR nor CANX. Interacts with AIMP1; regulates its retention in the endoplasmic reticulum. Hyperglycosylated form interacts with OS9; promoting its degradation by the endoplasmic reticulum associated degradation (ERAD). Interacts with CNPY3. This interaction is disrupted in the presence of ATP. Interacts with TLR4 and TLR9, but not with TLR3. Interacts with MZB1 in a calcium-dependent manner. Interacts with METTL23. Interacts with IL1B; the interaction facilitates cargo translocation into the ERGIC. Interacts with EIF2AK3. Phosphorylated by CK2. In terms of processing, N-glycosylated cotranslationally at Asn-217 by STT3A-containing OST-A complex: this glycosylation is constitutive. In response to various stress, 5 additional facultative sites (Asn-62, Asn-107, Asn-445, Asn-481 and Asn-502) can be glycosylated post-translationally by STT3B-containing OST-B complex, leading to a hyperglycosylated form that is degraded by the ER-associated degradation (ERAD) pathway. In normal conditions, the OST-A complex together with CCDC134 prevent glycosylation at facultative sites during protein folding, thereby preventing hyperglycosylation. Mechanistically, nascent HSP90B1 is tethered during translation to a specialized CCDC134-containing translocon that forms a microenvironment for its folding, in which STT3A associates with the SRT pseudosubstrate motif, and prevents access to facultative glycosylation sites until folding is completed, rendering its facultative sites inaccessible to the OST-B complex.

The protein resides in the endoplasmic reticulum lumen. It localises to the sarcoplasmic reticulum lumen. The protein localises to the melanosome. The enzyme catalyses ATP + H2O = ADP + phosphate + H(+). Functionally, ATP-dependent chaperone involved in the processing of proteins in the endoplasmic reticulum, regulating their transport. Together with MESD, acts as a modulator of the Wnt pathway by promoting the folding of LRP6, a coreceptor of the canonical Wnt pathway. When associated with CNPY3, required for proper folding of Toll-like receptors. Promotes folding and trafficking of TLR4 to the cell surface. May participate in the unfolding of cytosolic leaderless cargos (lacking the secretion signal sequence) such as the interleukin 1/IL-1 to facilitate their translocation into the ERGIC (endoplasmic reticulum-Golgi intermediate compartment) and secretion; the translocation process is mediated by the cargo receptor TMED10. This is Endoplasmin (HSP90B1) from Bos taurus (Bovine).